The sequence spans 343 residues: MGVPIGELIPRKEIELENLYGKKIAIDALNAIYQFLSTIRQRDGTPLMDSKGRITSHLSGLFYRTINLMEAGIKPVYVFDGKPPAFKKKELEKRREAREEAEIKWKEALAKGDIEEARKYAQRATKVNEMLIEDAKKLLQLMGIPIVQAPSEGEAQAAYMAGKGDVYASASQDYDSLLFGTPRLVRNLTITGKRKMPGKDIYVEIKPELIVLEEVLKELKITREKLIELAILVGTDYNPGGIKGIGPKKALEIVKYSKDPLAKFQRQSDVDLYAIKEFFLNPPTTDDYSLKWKEPDEEGIIRFLCDEHDFSEERVKNGLERLKKAIKAGKQSTLESWFIKKKP.

The interval 1 to 98 is N-domain; that stretch reads MGVPIGELIP…KELEKRREAR (98 aa). Mg(2+)-binding residues include Asp-27, Asp-80, Glu-152, Glu-154, Asp-173, Asp-175, and Asp-236. The I-domain stretch occupies residues 116–258; it reads EARKYAQRAT…KALEIVKYSK (143 aa). The interval 330 to 338 is interaction with PCNA; the sequence is KQSTLESWF.

The protein belongs to the XPG/RAD2 endonuclease family. FEN1 subfamily. As to quaternary structure, interacts with PCNA. PCNA stimulates the nuclease activity without altering cleavage specificity. The cofactor is Mg(2+).

Its function is as follows. Structure-specific nuclease with 5'-flap endonuclease and 5'-3' exonuclease activities involved in DNA replication and repair. During DNA replication, cleaves the 5'-overhanging flap structure that is generated by displacement synthesis when DNA polymerase encounters the 5'-end of a downstream Okazaki fragment. Binds the unpaired 3'-DNA end and kinks the DNA to facilitate 5' cleavage specificity. Cleaves one nucleotide into the double-stranded DNA from the junction in flap DNA, leaving a nick for ligation. Also involved in the base excision repair (BER) pathway. Acts as a genome stabilization factor that prevents flaps from equilibrating into structures that lead to duplications and deletions. Also possesses 5'-3' exonuclease activity on nicked or gapped double-stranded DNA. This Pyrococcus abyssi (strain GE5 / Orsay) protein is Flap endonuclease 1.